A 37-amino-acid polypeptide reads, in one-letter code: Large ribosomal subunit protein bL36 (37 aa).

The protein belongs to the bacterial ribosomal protein bL36 family.

This is Large ribosomal subunit protein bL36 from Leptospira biflexa serovar Patoc (strain Patoc 1 / Ames).